The primary structure comprises 207 residues: Ras-related protein Rab-7a (207 aa).

Threonine 2 carries the post-translational modification N-acetylthreonine. Residues serine 17, glycine 18, valine 19, glycine 20, lysine 21, threonine 22, serine 23, serine 34, asparagine 35, tyrosine 37, and threonine 40 each coordinate GTP. Threonine 22 contacts Mg(2+). Positions 28 to 41 (YVNKKFSNQYKATI) match the Switch 1 motif. Residues threonine 40 and aspartate 63 each coordinate Mg(2+). Glycine 66 contributes to the GTP binding site. The short motif at 67 to 82 (QERFQSLGVAFYRGAD) is the Switch 2 element. Residue serine 72 is modified to Phosphoserine. 5 residues coordinate GTP: asparagine 125, lysine 126, aspartate 128, alanine 156, and lysine 157. Glycyl lysine isopeptide (Lys-Gly) (interchain with G-Cter in ubiquitin) cross-links involve residues lysine 191 and lysine 194. S-geranylgeranyl cysteine attachment occurs at residues cysteine 205 and cysteine 207. The residue at position 207 (cysteine 207) is a Cysteine methyl ester.

Belongs to the small GTPase superfamily. Rab family. As to quaternary structure, interacts with NTRK1/TRKA. Interacts with RILP. Interacts with PSMA7. Interacts with RNF115. Interacts with FYCO1. Interacts with the PIK3C3/VPS34-PIK3R4 complex. The GTP-bound form interacts with OSBPL1A. The GTP-bound form interacts with RAC1. Interacts with CLN3. Interacts with CHM, the substrate-binding subunit of the Rab geranylgeranyltransferase complex. Interacts with C9orf72. Does not interact with HPS4 and the BLOC-3 complex (heterodimer of HPS1 and HPS4). Interacts with CLN5. Interacts with PLEKHM1 (via N- and C-terminus). Interacts with PRPH; the interaction is direct. Interacts with VPS13A. The GDP-bound form interacts with RIMOC1. Interacts with the MON1A-CCZ1B complex and this interaction is enhanced in the presence of RIMOC1. Interacts with VPS39 and VPS41. Forms a ternary complex with LAMP2 and RUFY4; the interaction with LAMP2 is mediated by RUFY4 (via RUN and coiled coil domains). Mg(2+) is required as a cofactor. In terms of processing, deubiquitination at Lys-191 and Lys-194 by USP32. Phosphorylated at Ser-72 by LRRK1; phosphorylation is dependent on protein kinase C (PKC) activation of LRRK1. Post-translationally, prenylated. Prenylation is required for association with cellular membranes.

It localises to the cytoplasmic vesicle. It is found in the phagosome membrane. The protein localises to the late endosome membrane. Its subcellular location is the lysosome membrane. The protein resides in the melanosome membrane. It localises to the autophagosome membrane. It is found in the lipid droplet. The protein localises to the endosome membrane. Its subcellular location is the mitochondrion membrane. It catalyses the reaction GTP + H2O = GDP + phosphate + H(+). Regulated by guanine nucleotide exchange factors (GEFs) which promote the exchange of bound GDP for free GTP. Regulated by GTPase activating proteins (GAPs) which increase the GTP hydrolysis activity. Inhibited by GDP dissociation inhibitors (GDIs). In terms of biological role, the small GTPases Rab are key regulators of intracellular membrane trafficking, from the formation of transport vesicles to their fusion with membranes. Rabs cycle between an inactive GDP-bound form and an active GTP-bound form that is able to recruit to membranes different sets of downstream effectors directly responsible for vesicle formation, movement, tethering and fusion. In its active state, RAB7A binds to a variety of effector proteins playing a key role in the regulation of endo-lysosomal trafficking. Governs early-to-late endosomal maturation, microtubule minus-end as well as plus-end directed endosomal migration and positioning, and endosome-lysosome transport through different protein-protein interaction cascades. Also plays a central role in growth-factor-mediated cell signaling, nutrient-transporter-mediated nutrient uptake, neurotrophin transport in the axons of neurons and lipid metabolism. Also involved in regulation of some specialized endosomal membrane trafficking, such as maturation of melanosomes, pathogen-induced phagosomes (or vacuoles) and autophagosomes. Plays a role in the maturation and acidification of phagosomes that engulf pathogens, such as S.aureus and Mycobacteria. Plays a role in the fusion of phagosomes with lysosomes. In concert with RAC1, plays a role in regulating the formation of RBs (ruffled borders) in osteoclasts. Controls the endosomal trafficking and neurite outgrowth signaling of NTRK1/TRKA. Regulates the endocytic trafficking of the EGF-EGFR complex by regulating its lysosomal degradation. Involved in the ADRB2-stimulated lipolysis through lipophagy, a cytosolic lipase-independent autophagic pathway. Required for the exosomal release of SDCBP, CD63 and syndecan. Required for vesicular trafficking and cell surface expression of ACE2. May play a role in PRPH neuronal intermediate filament assembly. This Canis lupus familiaris (Dog) protein is Ras-related protein Rab-7a (RAB7A).